We begin with the raw amino-acid sequence, 519 residues long: Transketolase, chloroplastic (519 aa).

Aspartate 11 is a binding site for Mg(2+). Residues glycine 12 and asparagine 41 each coordinate thiamine diphosphate. Mg(2+)-binding residues include asparagine 41 and isoleucine 43. Histidine 118 is a binding site for thiamine diphosphate. Residues histidine 118, arginine 212, and serine 239 each contribute to the substrate site. 2 residues coordinate thiamine diphosphate: glutamate 266 and phenylalanine 293. Glutamate 266 serves as the catalytic Proton donor. Residues histidine 317, aspartate 325, and arginine 376 each contribute to the substrate site.

It belongs to the transketolase family. As to quaternary structure, homodimer. Requires Mg(2+) as cofactor. The cofactor is Ca(2+). Mn(2+) is required as a cofactor. Co(2+) serves as cofactor. It depends on thiamine diphosphate as a cofactor. Constitutively expressed in leaves and roots.

It is found in the plastid. Its subcellular location is the chloroplast. The enzyme catalyses D-sedoheptulose 7-phosphate + D-glyceraldehyde 3-phosphate = aldehydo-D-ribose 5-phosphate + D-xylulose 5-phosphate. Its function is as follows. Catalyzes the transfer of a two-carbon ketol group from a ketose donor to an aldose acceptor, via a covalent intermediate with the cofactor thiamine pyrophosphate. This Craterostigma plantagineum (Blue gem) protein is Transketolase, chloroplastic (TKT3).